The sequence spans 74 residues: Hadrucalcin (74 aa).

The first 27 residues, 1–27 (MKTSSLTIIFIAVIITIICLNIHDIEA), serve as a signal peptide directing secretion. The propeptide occupies 28–39 (REIEFNAGRVVR). Cystine bridges form between Cys-44/Cys-58, Cys-51/Cys-62, and Cys-57/Cys-73. An essential for stimulation of [3H]ryanodine binding to RYR1 region spans residues 64–65 (RR).

In terms of tissue distribution, expressed by the venom gland.

It localises to the secreted. Functionally, this toxin activates ryanodine receptors RyR1 and RyR2 by inducing a long-lasting subconductance state (35% of the full conductance stateon RyR1). Furthermore, it triggers calcium release from sarcoplasmic vesicles (11.8 nM are enough to induce a sharp release on RyR1, and 55% of the total calcium is released after toxin (100 nM) addition on RyR1) probably by acting as a cell-penetrating peptide (CPP). In addition, it has been shown to dose-dependently stimulate ryanodine binding to RyR1 (EC(50)=14.8 nM). It also augments the bell-shaped calcium-[3H]ryanodine binding curve that is maximal at about 10 uM calcium concentration. It binds a different site as ryanodine. It acts synergistically with caffeine. In vivo, intracerebroventricular injection into mice induces neurotoxic symptoms, followed by death. In Hoffmannihadrurus gertschi (Scorpion), this protein is Hadrucalcin.